The following is a 396-amino-acid chain: Probable sugar efflux transporter (396 aa).

Helical transmembrane passes span 15-35 (VVTL…PVGL), 50-70 (VGIM…PFML), 81-101 (LICL…SWSF), 103-123 (VLVI…SITA), 136-156 (AQAL…GLPL), 170-190 (FFAI…LLPL), 209-229 (PALM…YTAY), 246-266 (FATA…VIFG), 275-295 (ALVS…LPAA), 299-319 (IHLG…GLGM), 333-353 (VAMA…ALVG), and 364-384 (MIGY…IIIF).

This sequence belongs to the major facilitator superfamily. SotB (TC 2.A.1.2) family.

The protein resides in the cell inner membrane. Its function is as follows. Involved in the efflux of sugars. The physiological role may be the reduction of the intracellular concentration of toxic sugars or sugar metabolites. The polypeptide is Probable sugar efflux transporter (Escherichia coli O127:H6 (strain E2348/69 / EPEC)).